Reading from the N-terminus, the 1241-residue chain is ATP-dependent helicase/nuclease subunit A (1241 aa).

Residues 12–485 (SQWTDDQWKA…IDLAKNFRSR (474 aa)) form the UvrD-like helicase ATP-binding domain. 33–40 (AAAGSGKT) is an ATP binding site. Residues 505–805 (GEIDYDADAE…RIMTIHKSKG (301 aa)) enclose the UvrD-like helicase C-terminal domain.

Belongs to the helicase family. AddA subfamily. As to quaternary structure, heterodimer of AddA and AddB/RexB. It depends on Mg(2+) as a cofactor.

It catalyses the reaction Couples ATP hydrolysis with the unwinding of duplex DNA by translocating in the 3'-5' direction.. It carries out the reaction ATP + H2O = ADP + phosphate + H(+). Functionally, the heterodimer acts as both an ATP-dependent DNA helicase and an ATP-dependent, dual-direction single-stranded exonuclease. Recognizes the chi site generating a DNA molecule suitable for the initiation of homologous recombination. The AddA nuclease domain is required for chi fragment generation; this subunit has the helicase and 3' -&gt; 5' nuclease activities. This Bacillus anthracis protein is ATP-dependent helicase/nuclease subunit A.